The sequence spans 391 residues: Zinc finger protein 414 (391 aa).

Positions 1 to 110 (MDEEPSGPSL…RRPPPGKQIP (110 aa)) are disordered. Residues 84–93 (GPTSTVSGTS) show a composition bias toward polar residues. 3 C2H2-type zinc fingers span residues 109-133 (IPCS…LRTH), 145-169 (FRCS…GKLH), and 176-201 (FKCE…CAEH). Disordered regions lie at residues 201 to 243 (HAQS…LEPF), 274 to 312 (LAAA…SGHA), and 344 to 391 (HLED…FSPL). A compositionally biased stretch (basic and acidic residues) spans 214–226 (LDRESPASERPPE). Residues 227–236 (SDPAPAPGLP) show a composition bias toward pro residues. Residues 274-286 (LAAAPGPPASSAA) show a composition bias toward low complexity. The C2H2-type 4 zinc-finger motif lies at 326 to 348 (YSCMQCAFSTASRPAMTLHLEDH). Residues 353–372 (PAAPAPGQPRPDAPADPAPL) show a composition bias toward pro residues.

The protein belongs to the krueppel C2H2-type zinc-finger protein family.

Its subcellular location is the nucleus. Functionally, may be involved in transcriptional regulation. The polypeptide is Zinc finger protein 414 (ZNF414) (Bos taurus (Bovine)).